We begin with the raw amino-acid sequence, 300 residues long: Diphthine methyl ester synthase (300 aa).

S-adenosyl-L-methionine-binding positions include Leu-9, Asp-85, Gly-88, 113-114 (SV), Leu-164, Leu-222, and His-247.

This sequence belongs to the diphthine synthase family.

Its subcellular location is the cytoplasm. The enzyme catalyses 2-[(3S)-amino-3-carboxypropyl]-L-histidyl-[translation elongation factor 2] + 4 S-adenosyl-L-methionine = diphthine methyl ester-[translation elongation factor 2] + 4 S-adenosyl-L-homocysteine + 3 H(+). Its pathway is protein modification; peptidyl-diphthamide biosynthesis. Its function is as follows. S-adenosyl-L-methionine-dependent methyltransferase that catalyzes four methylations of the modified target histidine residue in translation elongation factor 2 (EF-2), to form an intermediate called diphthine methyl ester. The four successive methylation reactions represent the second step of diphthamide biosynthesis. This Yarrowia lipolytica (strain CLIB 122 / E 150) (Yeast) protein is Diphthine methyl ester synthase (DPH5).